Consider the following 454-residue polypeptide: UDP-N-acetylmuramate--L-alanine ligase (454 aa).

Residue 112-118 (GTHGKTT) participates in ATP binding.

The protein belongs to the MurCDEF family.

Its subcellular location is the cytoplasm. It carries out the reaction UDP-N-acetyl-alpha-D-muramate + L-alanine + ATP = UDP-N-acetyl-alpha-D-muramoyl-L-alanine + ADP + phosphate + H(+). It functions in the pathway cell wall biogenesis; peptidoglycan biosynthesis. Functionally, cell wall formation. The chain is UDP-N-acetylmuramate--L-alanine ligase from Oleidesulfovibrio alaskensis (strain ATCC BAA-1058 / DSM 17464 / G20) (Desulfovibrio alaskensis).